Here is a 354-residue protein sequence, read N- to C-terminus: Galactose-1-phosphate uridylyltransferase (354 aa).

A disordered region spans residues 36–72 (TVTTSEVRRDPLLGDSAPSRLAPQGRTYHPPADQCPL). Zn(2+)-binding residues include Cys70, Cys73, and His114. Asn154 is a binding site for UDP-alpha-D-glucose. A Zn(2+)-binding site is contributed by His165. His167 serves as the catalytic Tele-UMP-histidine intermediate. 2 residues coordinate UDP-alpha-D-glucose: Gln169 and Gln332.

The protein belongs to the galactose-1-phosphate uridylyltransferase type 1 family. The cofactor is Zn(2+).

It catalyses the reaction alpha-D-galactose 1-phosphate + UDP-alpha-D-glucose = alpha-D-glucose 1-phosphate + UDP-alpha-D-galactose. Its pathway is carbohydrate metabolism; galactose metabolism. In Streptomyces lividans, this protein is Galactose-1-phosphate uridylyltransferase (galT).